A 608-amino-acid chain; its full sequence is ATP-citrate synthase beta chain protein 2 (608 aa).

ATP is bound by residues 214–234 (ILRF…ELGG) and 265–291 (FKSE…KNQA). Glu231 serves as a coordination point for Mg(2+). His273 (tele-phosphohistidine intermediate) is an active-site residue. 292-302 (LIDAGAIVPTS) contacts CoA.

It belongs to the succinate/malate CoA ligase alpha subunit family. Heterooctamer of 4 alpha and 4 beta chains. As to expression, expressed in trichomes, epidermal leaf cells, anther tapetal cells, stigma and in young vascular bundles of expanding leaves, cotyledons, roots, pedicel of flowers and siliques.

Its subcellular location is the cytoplasm. It localises to the cytosol. The enzyme catalyses oxaloacetate + acetyl-CoA + ADP + phosphate = citrate + ATP + CoA. ATP citrate-lyase is the primary enzyme responsible for the synthesis of cytosolic acetyl-CoA, used for the elongation of fatty acids and biosynthesis of isoprenoids, flavonoids and malonated derivatives. May supply substrate to the cytosolic acetyl-CoA carboxylase, which generates the malonyl-CoA used for the synthesis of a multitude of compounds, including very long chain fatty acids and flavonoids. Required for normal growth and development and elongation of C18 fatty acids to C20 to C24 fatty acids in seeds. n contrast to all known animal ACL enzymes having a homomeric structure, plant ACLs are composed of alpha and beta chains. The polypeptide is ATP-citrate synthase beta chain protein 2 (Arabidopsis thaliana (Mouse-ear cress)).